The chain runs to 106 residues: MPLTPPPDYTRVYTALAIGASIAFFTGLITRNTLPSVGDLQHNLPHGGRYRDGTKSVEYCGPRKLNSVESGSRWTFQPWLLVIVLVALIIALGRQGHNCRACGRSH.

Residues 1-8 lie on the Cytoplasmic side of the membrane; it reads MPLTPPPD. The helical transmembrane segment at 9 to 29 threads the bilayer; the sequence is YTRVYTALAIGASIAFFTGLI. Residues 30 to 73 lie on the Lumenal side of the membrane; that stretch reads TRNTLPSVGDLQHNLPHGGRYRDGTKSVEYCGPRKLNSVESGSR. The helical transmembrane segment at 74–94 threads the bilayer; that stretch reads WTFQPWLLVIVLVALIIALGR. At 95 to 106 the chain is on the cytoplasmic side; that stretch reads QGHNCRACGRSH.

It belongs to the Tymovirales TGBp2 protein family.

It localises to the host endoplasmic reticulum membrane. Its function is as follows. Plays a role in viral cell-to-cell propagation, by facilitating genome transport to neighboring plant cells through plasmosdesmata,. The protein is Movement protein TGB2 of Lilium (LSV).